The primary structure comprises 553 residues: Chaperonin GroEL (553 aa).

Residues 30–33 (TLGP), K51, 87–91 (DGTTT), G415, and D495 contribute to the ATP site.

The protein belongs to the chaperonin (HSP60) family. In terms of assembly, forms a cylinder of 14 subunits composed of two heptameric rings stacked back-to-back. Interacts with the co-chaperonin GroES.

The protein resides in the cytoplasm. The enzyme catalyses ATP + H2O + a folded polypeptide = ADP + phosphate + an unfolded polypeptide.. Its function is as follows. Together with its co-chaperonin GroES, plays an essential role in assisting protein folding. The GroEL-GroES system forms a nano-cage that allows encapsulation of the non-native substrate proteins and provides a physical environment optimized to promote and accelerate protein folding. In Buchnera aphidicola subsp. Tuberolachnus salignus, this protein is Chaperonin GroEL.